Reading from the N-terminus, the 236-residue chain is Aquaporin Z (236 aa).

2 helical membrane passes run 12–32 (FFGTFWLVLGGCGSAVLAAGV) and 37–57 (IGYAGVALAFGLTVLTMAYAV). The NPA 1 signature appears at 66-68 (NPA). 3 helical membrane-spanning segments follow: residues 92-112 (VVGAIVAAATLASIAQGVAGF), 136-156 (AALICEIVLSAGFVFVILGAT), and 163-183 (GFAPIPIGLALTLIHLISIPV). Positions 189–191 (NPA) match the NPA 2 motif. Residues 197-217 (ALFVGGWALEQLWLFWLAPIA) form a helical membrane-spanning segment.

The protein belongs to the MIP/aquaporin (TC 1.A.8) family. Homotetramer.

Its subcellular location is the cell inner membrane. The enzyme catalyses H2O(in) = H2O(out). Functionally, channel that permits osmotically driven movement of water in both directions. It is involved in the osmoregulation and in the maintenance of cell turgor during volume expansion in rapidly growing cells. It mediates rapid entry or exit of water in response to abrupt changes in osmolarity. The polypeptide is Aquaporin Z (Bordetella bronchiseptica (strain ATCC BAA-588 / NCTC 13252 / RB50) (Alcaligenes bronchisepticus)).